A 281-amino-acid polypeptide reads, in one-letter code: tRNA pseudouridine synthase A (281 aa).

Catalysis depends on aspartate 55, which acts as the Nucleophile. Tyrosine 110 is a binding site for substrate.

Belongs to the tRNA pseudouridine synthase TruA family.

It carries out the reaction uridine(38/39/40) in tRNA = pseudouridine(38/39/40) in tRNA. Its function is as follows. Formation of pseudouridine at positions 38, 39 and 40 in the anticodon stem and loop of transfer RNAs. This chain is tRNA pseudouridine synthase A, found in Methanocorpusculum labreanum (strain ATCC 43576 / DSM 4855 / Z).